We begin with the raw amino-acid sequence, 372 residues long: MACNSTSLEAYTYLLLNTSNASDSGSTQLPAPLRISLAIVMLLMTVVGFLGNTVVCIIVYQRPAMRSAINLLLATLAFSDIMLSLCCMPFTAVTLITVRWHFGDHFCRLSATLYWFFVLEGVAILLIISVDRFLIIVQRQDKLNPRRAKVIIAVSWVLSFCIAGPSLTGWTLVEVPARAPQCVLGYTELPADRAYVVTLVVAVFFAPFGVMLCAYMCILNTVRKNAVRVHNQSDSLDLRQLTRAGLRRLQRQQQVSVDLSFKTKAFTTILILFVGFSLCWLPHSVYSLLSVFSQRFYCGSSFYATSTCVLWLSYLKSVFNPIVYCWRIKKFREACIELLPQTFQILPKVPERIRRRIQPSTVYVCNENQSAV.

Over 1 to 38 (MACNSTSLEAYTYLLLNTSNASDSGSTQLPAPLRISLA) the chain is Extracellular. N-linked (GlcNAc...) asparagine glycans are attached at residues Asn-4, Asn-17, and Asn-20. The chain crosses the membrane as a helical span at residues 39–59 (IVMLLMTVVGFLGNTVVCIIV). Residues 60 to 75 (YQRPAMRSAINLLLAT) lie on the Cytoplasmic side of the membrane. The chain crosses the membrane as a helical span at residues 76-96 (LAFSDIMLSLCCMPFTAVTLI). The Extracellular segment spans residues 97–109 (TVRWHFGDHFCRL). Residues 110-130 (SATLYWFFVLEGVAILLIISV) traverse the membrane as a helical segment. The Cytoplasmic portion of the chain corresponds to 131–149 (DRFLIIVQRQDKLNPRRAK). Residues 150-170 (VIIAVSWVLSFCIAGPSLTGW) form a helical membrane-spanning segment. The Extracellular portion of the chain corresponds to 171–198 (TLVEVPARAPQCVLGYTELPADRAYVVT). Residues 199-219 (LVVAVFFAPFGVMLCAYMCIL) form a helical membrane-spanning segment. At 220–268 (NTVRKNAVRVHNQSDSLDLRQLTRAGLRRLQRQQQVSVDLSFKTKAFTT) the chain is on the cytoplasmic side. The helical transmembrane segment at 269-289 (ILILFVGFSLCWLPHSVYSLL) threads the bilayer. Topologically, residues 290 to 305 (SVFSQRFYCGSSFYAT) are extracellular. The chain crosses the membrane as a helical span at residues 306–326 (STCVLWLSYLKSVFNPIVYCW). Topologically, residues 327–372 (RIKKFREACIELLPQTFQILPKVPERIRRRIQPSTVYVCNENQSAV) are cytoplasmic.

Belongs to the G-protein coupled receptor 1 family. As to expression, expressed in brain; detected in the basal forebrain, frontal cortex, and caudate, but not in thalamus, hippocampus, or putamen.

Its subcellular location is the cell membrane. Functionally, orphan receptor. May play a role in brain function. The polypeptide is Probable G-protein coupled receptor 45 (GPR45) (Homo sapiens (Human)).